Here is a 184-residue protein sequence, read N- to C-terminus: ATP synthase subunit b, chloroplastic (184 aa).

The helical transmembrane segment at 27 to 49 threads the bilayer; it reads LATNPINLSVVLGVLIFFGKGVL.

This sequence belongs to the ATPase B chain family. In terms of assembly, F-type ATPases have 2 components, F(1) - the catalytic core - and F(0) - the membrane proton channel. F(1) has five subunits: alpha(3), beta(3), gamma(1), delta(1), epsilon(1). F(0) has four main subunits: a(1), b(1), b'(1) and c(10-14). The alpha and beta chains form an alternating ring which encloses part of the gamma chain. F(1) is attached to F(0) by a central stalk formed by the gamma and epsilon chains, while a peripheral stalk is formed by the delta, b and b' chains.

Its subcellular location is the plastid. It is found in the chloroplast thylakoid membrane. In terms of biological role, f(1)F(0) ATP synthase produces ATP from ADP in the presence of a proton or sodium gradient. F-type ATPases consist of two structural domains, F(1) containing the extramembraneous catalytic core and F(0) containing the membrane proton channel, linked together by a central stalk and a peripheral stalk. During catalysis, ATP synthesis in the catalytic domain of F(1) is coupled via a rotary mechanism of the central stalk subunits to proton translocation. Functionally, component of the F(0) channel, it forms part of the peripheral stalk, linking F(1) to F(0). In Morus indica (Mulberry), this protein is ATP synthase subunit b, chloroplastic.